A 490-amino-acid polypeptide reads, in one-letter code: DNA-binding protein D-ETS-3 (490 aa).

Disordered stretches follow at residues 190-255 and 271-294; these read TASS…SGGG and SSTQ…SQLR. A compositionally biased stretch (basic and acidic residues) spans 196–207; sequence HVEHKVRADKST. Residues 211 to 227 show a composition bias toward low complexity; that stretch reads ATTSSHAAAPSSSSSAS. Gly residues predominate over residues 244–255; that stretch reads GTGGGASASGGG. Positions 271–280 are enriched in low complexity; that stretch reads SSTQSQGYSS. Positions 317–397 form a DNA-binding region, ETS; sequence IQLWQFLLEL…HGKRYAYKFD (81 aa).

This sequence belongs to the ETS family. As to expression, embryonic ventral nervous system, higher in the thoracic than abdominal segments.

The protein localises to the nucleus. This Drosophila melanogaster (Fruit fly) protein is DNA-binding protein D-ETS-3 (Ets65A).